Here is a 1057-residue protein sequence, read N- to C-terminus: Carbamoyl phosphate synthase large chain (1057 aa).

Residues 1-401 (MPKRDDIQTI…SLLKAIRSLE (401 aa)) are carboxyphosphate synthetic domain. Positions 129, 169, 175, 176, 208, 210, 215, 241, 242, 243, 284, and 298 each coordinate ATP. One can recognise an ATP-grasp 1 domain in the interval 133 to 327 (RSLMNDLNVP…IAKLAAKIAV (195 aa)). Mg(2+) contacts are provided by Q284, E298, and N300. Mn(2+) contacts are provided by Q284, E298, and N300. The oligomerization domain stretch occupies residues 402-546 (YGVHHLGLPN…YGTYETENES (145 aa)). The tract at residues 547–929 (IVTDKEKILV…ALYKGLTGSG (383 aa)) is carbamoyl phosphate synthetic domain. The region spanning 671–861 (EALLHTIDVP…MAQLAMQAIM (191 aa)) is the ATP-grasp 2 domain. The ATP site is built by R707, R746, L748, E752, G777, V778, H779, S780, Q820, and E832. The Mg(2+) site is built by Q820, E832, and N834. 3 residues coordinate Mn(2+): Q820, E832, and N834. The 128-residue stretch at 930 to 1057 (VEVKDHGTVL…ESMTFSMRTM (128 aa)) folds into the MGS-like domain. Positions 930–1057 (VEVKDHGTVL…ESMTFSMRTM (128 aa)) are allosteric domain.

The protein belongs to the CarB family. In terms of assembly, composed of two chains; the small (or glutamine) chain promotes the hydrolysis of glutamine to ammonia, which is used by the large (or ammonia) chain to synthesize carbamoyl phosphate. Tetramer of heterodimers (alpha,beta)4. Mg(2+) serves as cofactor. It depends on Mn(2+) as a cofactor.

It catalyses the reaction hydrogencarbonate + L-glutamine + 2 ATP + H2O = carbamoyl phosphate + L-glutamate + 2 ADP + phosphate + 2 H(+). The enzyme catalyses hydrogencarbonate + NH4(+) + 2 ATP = carbamoyl phosphate + 2 ADP + phosphate + 2 H(+). Its pathway is amino-acid biosynthesis; L-arginine biosynthesis; carbamoyl phosphate from bicarbonate: step 1/1. It participates in pyrimidine metabolism; UMP biosynthesis via de novo pathway; (S)-dihydroorotate from bicarbonate: step 1/3. Its function is as follows. Large subunit of the glutamine-dependent carbamoyl phosphate synthetase (CPSase). CPSase catalyzes the formation of carbamoyl phosphate from the ammonia moiety of glutamine, carbonate, and phosphate donated by ATP, constituting the first step of 2 biosynthetic pathways, one leading to arginine and/or urea and the other to pyrimidine nucleotides. The large subunit (synthetase) binds the substrates ammonia (free or transferred from glutamine from the small subunit), hydrogencarbonate and ATP and carries out an ATP-coupled ligase reaction, activating hydrogencarbonate by forming carboxy phosphate which reacts with ammonia to form carbamoyl phosphate. The chain is Carbamoyl phosphate synthase large chain from Staphylococcus haemolyticus (strain JCSC1435).